The chain runs to 389 residues: S-adenosylmethionine synthase 2 (389 aa).

His-17 contacts ATP. Asp-19 contributes to the Mg(2+) binding site. Glu-45 lines the K(+) pocket. 2 residues coordinate L-methionine: Glu-58 and Gln-102. The interval Gln-102–Ala-112 is flexible loop. ATP-binding positions include Asp-166–Lys-168, Arg-231–Phe-232, Asp-240, Arg-246–Lys-247, Ala-263, and Lys-267. Asp-240 contacts L-methionine. L-methionine is bound at residue Lys-271.

It belongs to the AdoMet synthase family. As to quaternary structure, homotetramer; dimer of dimers. Requires Mg(2+) as cofactor. The cofactor is K(+).

It is found in the cytoplasm. It carries out the reaction L-methionine + ATP + H2O = S-adenosyl-L-methionine + phosphate + diphosphate. It functions in the pathway amino-acid biosynthesis; S-adenosyl-L-methionine biosynthesis; S-adenosyl-L-methionine from L-methionine: step 1/1. Functionally, catalyzes the formation of S-adenosylmethionine (AdoMet) from methionine and ATP. The overall synthetic reaction is composed of two sequential steps, AdoMet formation and the subsequent tripolyphosphate hydrolysis which occurs prior to release of AdoMet from the enzyme. This Rhodospirillum rubrum (strain ATCC 11170 / ATH 1.1.1 / DSM 467 / LMG 4362 / NCIMB 8255 / S1) protein is S-adenosylmethionine synthase 2.